Consider the following 345-residue polypeptide: Protein TRIGALACTOSYLDIACYLGLYCEROL 3, chloroplastic (345 aa).

Residues 1–46 (MLSLSCSSSSSSLLPPSLHYHGSSSVQSIVVPRRSLISFRRKVSCC) constitute a chloroplast transit peptide. One can recognise an ABC transporter domain in the interval 85-336 (IECRDVYKSF…TNPIVQQFAT (252 aa)). An ATP-binding site is contributed by 117-124 (GPSGTGKS).

The protein belongs to the ABC transporter superfamily. ABCI family. Catalytic subunit of the TGD complex, a lipid translocator at the inner chloroplast envelope membrane made of TGD1, TGD2 and TGD3. Interacts with TGD1 and TGD2 with an overall subunit stoichiometry of 2 TGD1, 2 TGD3 and 8 to 12 TGD2. Interacts with TGD5.

Its subcellular location is the plastid. The protein resides in the chloroplast stroma. Functionally, ATPase transporter involved in lipid transfer from the endoplasmic reticulum (ER) to plastids, and necessary for thylakoids formation. Not involved in transition metal transport pathways. The protein is Protein TRIGALACTOSYLDIACYLGLYCEROL 3, chloroplastic of Arabidopsis thaliana (Mouse-ear cress).